The sequence spans 374 residues: UPF0754 membrane protein NWMN_1738 (374 aa).

2 helical membrane passes run 4–24 (LFII…TNVI) and 354–374 (SLGF…AIFV).

The protein belongs to the UPF0754 family.

The protein localises to the cell membrane. In Staphylococcus aureus (strain Newman), this protein is UPF0754 membrane protein NWMN_1738.